The primary structure comprises 485 residues: Glutamyl-tRNA(Gln) amidotransferase subunit A (485 aa).

Active-site charge relay system residues include Lys-79 and Ser-154. Ser-178 (acyl-ester intermediate) is an active-site residue.

This sequence belongs to the amidase family. GatA subfamily. In terms of assembly, heterotrimer of A, B and C subunits.

The enzyme catalyses L-glutamyl-tRNA(Gln) + L-glutamine + ATP + H2O = L-glutaminyl-tRNA(Gln) + L-glutamate + ADP + phosphate + H(+). Functionally, allows the formation of correctly charged Gln-tRNA(Gln) through the transamidation of misacylated Glu-tRNA(Gln) in organisms which lack glutaminyl-tRNA synthetase. The reaction takes place in the presence of glutamine and ATP through an activated gamma-phospho-Glu-tRNA(Gln). This is Glutamyl-tRNA(Gln) amidotransferase subunit A from Persephonella marina (strain DSM 14350 / EX-H1).